A 74-amino-acid polypeptide reads, in one-letter code: MSGGTTGERPFSDIVTSIRYWVIHTVTIPSLFVAGWLFVSTGLAYDVFGTPRPDEYFTEERQEVPIINQRFSTN.

Residues 22–36 (VIHTVTIPSLFVAGW) form a helical membrane-spanning segment. Residue H24 coordinates heme.

The protein belongs to the PsbE/PsbF family. In terms of assembly, heterodimer of an alpha subunit and a beta subunit. PSII is composed of 1 copy each of membrane proteins PsbA, PsbB, PsbC, PsbD, PsbE, PsbF, PsbH, PsbI, PsbJ, PsbK, PsbL, PsbM, PsbT, PsbX, PsbY, PsbZ, Psb30/Ycf12, at least 3 peripheral proteins of the oxygen-evolving complex and a large number of cofactors. It forms dimeric complexes. It depends on heme b as a cofactor.

The protein localises to the plastid. It localises to the cyanelle thylakoid membrane. Its function is as follows. This b-type cytochrome is tightly associated with the reaction center of photosystem II (PSII). PSII is a light-driven water:plastoquinone oxidoreductase that uses light energy to abstract electrons from H(2)O, generating O(2) and a proton gradient subsequently used for ATP formation. It consists of a core antenna complex that captures photons, and an electron transfer chain that converts photonic excitation into a charge separation. The protein is Cytochrome b559 subunit alpha of Cyanophora paradoxa.